A 526-amino-acid chain; its full sequence is Peptide chain release factor 3 (526 aa).

A tr-type G domain is found at 9 to 277 (DKRRTFAIIS…GIVEWAPKPL (269 aa)). Residues 18 to 25 (SHPDAGKT), 86 to 90 (DTPGH), and 140 to 143 (NKLD) each bind GTP.

Belongs to the TRAFAC class translation factor GTPase superfamily. Classic translation factor GTPase family. PrfC subfamily.

It localises to the cytoplasm. Increases the formation of ribosomal termination complexes and stimulates activities of RF-1 and RF-2. It binds guanine nucleotides and has strong preference for UGA stop codons. It may interact directly with the ribosome. The stimulation of RF-1 and RF-2 is significantly reduced by GTP and GDP, but not by GMP. In Shewanella sp. (strain MR-4), this protein is Peptide chain release factor 3.